Reading from the N-terminus, the 314-residue chain is Olfactory receptor 4Q2 (314 aa).

At 1 to 26 (MDKNQTEVMREFFLSGFSQTPSIEAG) the chain is on the extracellular side. N-linked (GlcNAc...) asparagine glycosylation occurs at Asn4. Residues 27–47 (LFVLFLFFYMSIWVGNVLIMV) form a helical membrane-spanning segment. Topologically, residues 48-61 (TVASDKYLNSSPMY) are cytoplasmic. The chain crosses the membrane as a helical span at residues 62–84 (FLLGNLSFLDLCYSTVTTPKLLA). At 85-98 (DFFNHEKLISYDQC) the chain is on the extracellular side. Cysteines 98 and 181 form a disulfide. A helical membrane pass occupies residues 99 to 119 (IVQLFFLHFVGAAEMFLLTVM). At 120-142 (AYDRYVAICRPLHYTTVMSRGLC) the chain is on the cytoplasmic side. A helical transmembrane segment spans residues 143–163 (CVLVAASWMGGFVHSTVQTIL). The Extracellular portion of the chain corresponds to 164–196 (TVHLPFCGPNQVENTFFCDVPPVIKLACADTFV). Residues 197-217 (IELLMVSNSGLISTISFVVLI) form a helical membrane-spanning segment. Residues 218 to 236 (SSYTTILVKIRSKEGRRKA) lie on the Cytoplasmic side of the membrane. Residues 237-257 (LSTCASHLMVVTLFFGPCIFI) traverse the membrane as a helical segment. The Extracellular segment spans residues 258-268 (YARPFSTFSVD). Residues 269-289 (KMVSVLYNVITPMLNPLIYTL) traverse the membrane as a helical segment. At 290-314 (RNKEVKSAMQKLWVRNGLTWKKQET) the chain is on the cytoplasmic side.

It belongs to the G-protein coupled receptor 1 family.

The protein resides in the cell membrane. In terms of biological role, odorant receptor. The chain is Olfactory receptor 4Q2 (OR4Q2) from Homo sapiens (Human).